The primary structure comprises 459 residues: Cytosolic carboxypeptidase 6 (459 aa).

Residues 142–418 form the Peptidase M14 domain; that stretch reads IPYTYGQMQI…AFCRALLNFY (277 aa). Zn(2+) contacts are provided by His204, Glu207, and His302. Glu376 functions as the Proton donor/acceptor in the catalytic mechanism.

It belongs to the peptidase M14 family. Zn(2+) is required as a cofactor. In terms of tissue distribution, expressed in labial and amphid neurons.

It localises to the cytoplasm. It catalyses the reaction (L-glutamyl)(n+1)-gamma-L-glutamyl-L-glutamyl-[protein] + H2O = (L-glutamyl)(n)-gamma-L-glutamyl-L-glutamyl-[protein] + L-glutamate. Functionally, metallocarboxypeptidase that catalyzes the removing of polyglutamate side chains that are present on the gamma-carboxyl group of glutamate residues of tubulin in sensory cilia. Probably via the deglutamylation of tubulin, promotes microtubule stability required for axon regrowth after injury. Also regulates microtubule dynamics in uterine muscle cells. The chain is Cytosolic carboxypeptidase 6 from Caenorhabditis elegans.